The chain runs to 318 residues: Probable pyridoxal 5'-phosphate synthase subunit PDX1.1 (318 aa).

Asp-49 contacts D-ribose 5-phosphate. Lys-106 functions as the Schiff-base intermediate with D-ribose 5-phosphate in the catalytic mechanism. Gly-178 serves as a coordination point for D-ribose 5-phosphate. Arg-190 contributes to the D-glyceraldehyde 3-phosphate binding site. Residues Gly-239 and 260 to 261 each bind D-ribose 5-phosphate; that span reads GS.

Belongs to the PdxS/SNZ family.

It carries out the reaction aldehydo-D-ribose 5-phosphate + D-glyceraldehyde 3-phosphate + L-glutamine = pyridoxal 5'-phosphate + L-glutamate + phosphate + 3 H2O + H(+). It functions in the pathway cofactor biosynthesis; pyridoxal 5'-phosphate biosynthesis. Its function is as follows. Catalyzes the formation of pyridoxal 5'-phosphate from ribose 5-phosphate (RBP), glyceraldehyde 3-phosphate (G3P) and ammonia. The ammonia is provided by PDX2. Can also use ribulose 5-phosphate and dihydroxyacetone phosphate as substrates, resulting from enzyme-catalyzed isomerization of RBP and G3P, respectively. Also plays an indirect role in resistance to singlet oxygen-generating photosensitizers. In Oryza sativa subsp. japonica (Rice), this protein is Probable pyridoxal 5'-phosphate synthase subunit PDX1.1 (PDX11).